A 544-amino-acid polypeptide reads, in one-letter code: T-complex protein 1 subunit gamma (544 aa).

Cysteines 368 and 374 form a disulfide. Positions 525–544 (SKKRGGNEPTNPAAMAQGQE) are disordered.

Belongs to the TCP-1 chaperonin family. As to quaternary structure, heterooligomeric complex of about 850 to 900 kDa that forms two stacked rings, 12 to 16 nm in diameter.

It is found in the cytoplasm. Its function is as follows. Molecular chaperone; assists the folding of proteins upon ATP hydrolysis. Known to play a role, in vitro, in the folding of actin and tubulin. In Drosophila melanogaster (Fruit fly), this protein is T-complex protein 1 subunit gamma.